Reading from the N-terminus, the 233-residue chain is Probable transglycosylase IsaA (233 aa).

The first 29 residues, 1–29 (MKKTIMASSLAVALGVTGYAAGTGHQAHA), serve as a signal peptide directing secretion.

The protein belongs to the transglycosylase family. IsaA subfamily.

Its subcellular location is the secreted. Is able to cleave peptidoglycan. This Staphylococcus aureus (strain USA300) protein is Probable transglycosylase IsaA (isaA).